Here is a 473-residue protein sequence, read N- to C-terminus: Sulfate adenylyltransferase subunit 1 (473 aa).

The tr-type G domain maps to 19-238; that stretch reads KTLLKFLTCG…IKIKNSISSE (220 aa). The interval 28–35 is G1; the sequence is GSVDDGKS. 28-35 lines the GTP pocket; that stretch reads GSVDDGKS. The segment at 86 to 90 is G2; the sequence is GITID. The segment at 107–110 is G3; the sequence is DTPG. Residues 107–111 and 162–165 contribute to the GTP site; these read DTPGH and NKMD. Residues 162–165 are G4; the sequence is NKMD. Residues 200-202 are G5; it reads SAL.

The protein belongs to the TRAFAC class translation factor GTPase superfamily. Classic translation factor GTPase family. CysN/NodQ subfamily. Heterodimer composed of CysD, the smaller subunit, and CysN.

It carries out the reaction sulfate + ATP + H(+) = adenosine 5'-phosphosulfate + diphosphate. The protein operates within sulfur metabolism; hydrogen sulfide biosynthesis; sulfite from sulfate: step 1/3. Its function is as follows. With CysD forms the ATP sulfurylase (ATPS) that catalyzes the adenylation of sulfate producing adenosine 5'-phosphosulfate (APS) and diphosphate, the first enzymatic step in sulfur assimilation pathway. APS synthesis involves the formation of a high-energy phosphoric-sulfuric acid anhydride bond driven by GTP hydrolysis by CysN coupled to ATP hydrolysis by CysD. This is Sulfate adenylyltransferase subunit 1 from Buchnera aphidicola subsp. Acyrthosiphon pisum (strain 5A).